The chain runs to 207 residues: Thiamine-phosphate synthase (207 aa).

4-amino-2-methyl-5-(diphosphooxymethyl)pyrimidine is bound by residues Q36–K40 and D68. Mg(2+) contacts are provided by D69 and D88. A 4-amino-2-methyl-5-(diphosphooxymethyl)pyrimidine-binding site is contributed by S106. 2-[(2R,5Z)-2-carboxy-4-methylthiazol-5(2H)-ylidene]ethyl phosphate is bound at residue T132–T134. 4-amino-2-methyl-5-(diphosphooxymethyl)pyrimidine is bound at residue K135. 2-[(2R,5Z)-2-carboxy-4-methylthiazol-5(2H)-ylidene]ethyl phosphate contacts are provided by residues G162 and V182–S183.

The protein belongs to the thiamine-phosphate synthase family. It depends on Mg(2+) as a cofactor.

It catalyses the reaction 2-[(2R,5Z)-2-carboxy-4-methylthiazol-5(2H)-ylidene]ethyl phosphate + 4-amino-2-methyl-5-(diphosphooxymethyl)pyrimidine + 2 H(+) = thiamine phosphate + CO2 + diphosphate. The catalysed reaction is 2-(2-carboxy-4-methylthiazol-5-yl)ethyl phosphate + 4-amino-2-methyl-5-(diphosphooxymethyl)pyrimidine + 2 H(+) = thiamine phosphate + CO2 + diphosphate. It carries out the reaction 4-methyl-5-(2-phosphooxyethyl)-thiazole + 4-amino-2-methyl-5-(diphosphooxymethyl)pyrimidine + H(+) = thiamine phosphate + diphosphate. The protein operates within cofactor biosynthesis; thiamine diphosphate biosynthesis; thiamine phosphate from 4-amino-2-methyl-5-diphosphomethylpyrimidine and 4-methyl-5-(2-phosphoethyl)-thiazole: step 1/1. Functionally, condenses 4-methyl-5-(beta-hydroxyethyl)thiazole monophosphate (THZ-P) and 2-methyl-4-amino-5-hydroxymethyl pyrimidine pyrophosphate (HMP-PP) to form thiamine monophosphate (TMP). The chain is Thiamine-phosphate synthase from Pyrococcus abyssi (strain GE5 / Orsay).